A 232-amino-acid polypeptide reads, in one-letter code: Lipoprotein-releasing system ATP-binding protein LolD 1 (232 aa).

Residues 11 to 231 (VYLHDVKRQY…SIQDGLVVEL (221 aa)) enclose the ABC transporter domain. 47–54 (APSGAGKS) is an ATP binding site.

The protein belongs to the ABC transporter superfamily. Lipoprotein translocase (TC 3.A.1.125) family. As to quaternary structure, the complex is composed of two ATP-binding proteins (LolD) and two transmembrane proteins (LolC and LolE).

Its subcellular location is the cell inner membrane. Functionally, part of the ABC transporter complex LolCDE involved in the translocation of mature outer membrane-directed lipoproteins, from the inner membrane to the periplasmic chaperone, LolA. Responsible for the formation of the LolA-lipoprotein complex in an ATP-dependent manner. The chain is Lipoprotein-releasing system ATP-binding protein LolD 1 from Rhodopseudomonas palustris (strain BisB18).